The sequence spans 89 residues: MSITAERKSALIKEYATVEGDTGSPEVQVAILTERINNLTEHFKDHKKDNHSRRGLLTMVSSRRSLLDYLKKKDEGRYSKLISSLGIRR.

It belongs to the universal ribosomal protein uS15 family. In terms of assembly, part of the 30S ribosomal subunit. Forms a bridge to the 50S subunit in the 70S ribosome, contacting the 23S rRNA.

One of the primary rRNA binding proteins, it binds directly to 16S rRNA where it helps nucleate assembly of the platform of the 30S subunit by binding and bridging several RNA helices of the 16S rRNA. In terms of biological role, forms an intersubunit bridge (bridge B4) with the 23S rRNA of the 50S subunit in the ribosome. The sequence is that of Small ribosomal subunit protein uS15 from Rhizobium leguminosarum bv. trifolii (strain WSM2304).